The sequence spans 302 residues: 4-hydroxy-tetrahydrodipicolinate synthase (302 aa).

Residue Thr50 coordinates pyruvate. The active-site Proton donor/acceptor is the Tyr138. The active-site Schiff-base intermediate with substrate is the Lys167. Position 209 (Val209) interacts with pyruvate.

This sequence belongs to the DapA family. Homotetramer; dimer of dimers.

It is found in the cytoplasm. The catalysed reaction is L-aspartate 4-semialdehyde + pyruvate = (2S,4S)-4-hydroxy-2,3,4,5-tetrahydrodipicolinate + H2O + H(+). It functions in the pathway amino-acid biosynthesis; L-lysine biosynthesis via DAP pathway; (S)-tetrahydrodipicolinate from L-aspartate: step 3/4. Functionally, catalyzes the condensation of (S)-aspartate-beta-semialdehyde [(S)-ASA] and pyruvate to 4-hydroxy-tetrahydrodipicolinate (HTPA). This is 4-hydroxy-tetrahydrodipicolinate synthase from Salinibacter ruber (strain DSM 13855 / M31).